A 61-amino-acid chain; its full sequence is Large ribosomal subunit protein bL32 (61 aa).

The disordered stretch occupies residues 1–44 (MAVQQNRKSRSRRDMRRSHDALTENALTVDQTTGETHRRHHVTK). Residues 7–16 (RKSRSRRDMR) are compositionally biased toward basic residues. The span at 25 to 34 (NALTVDQTTG) shows a compositional bias: polar residues.

This sequence belongs to the bacterial ribosomal protein bL32 family.

This Acinetobacter baylyi (strain ATCC 33305 / BD413 / ADP1) protein is Large ribosomal subunit protein bL32.